A 427-amino-acid chain; its full sequence is 2-oxoglutarate and iron-dependent oxygenase JMJD4 (427 aa).

One can recognise a JmjC domain in the interval 147–306; sequence SLVNDLEDIF…NMWHFLQQEL (160 aa). Fe cation-binding residues include histidine 194, aspartate 196, and histidine 274.

Belongs to the JMJD6 family. In terms of assembly, interacts with ETF1. Interacts with the ETF1-GSPT1 complex. It depends on Fe(2+) as a cofactor.

It localises to the cytoplasm. It carries out the reaction L-lysyl-[protein] + 2-oxoglutarate + O2 = 4-hydroxy-L-lysyl-[protein] + succinate + CO2. Functionally, catalyzes the 2-oxoglutarate and iron-dependent C4-lysyl hydroxylation of ETF1 at 'Lys-63' thereby promoting the translational termination efficiency of ETF1. Not essential for embryonic stem cell (ESC) maintenance and the embryonic and postnatal development. The polypeptide is 2-oxoglutarate and iron-dependent oxygenase JMJD4 (Jmjd4) (Mus musculus (Mouse)).